The following is a 512-amino-acid chain: N-acetyltryptophan 6-hydroxylase ivoC (512 aa).

The helical transmembrane segment at Leu-6–Tyr-26 threads the bilayer. N-linked (GlcNAc...) asparagine glycosylation occurs at Asn-118. Cys-453 contacts heme.

It belongs to the cytochrome P450 family. It depends on heme as a cofactor.

The protein resides in the membrane. The protein operates within pigment biosynthesis. Its function is as follows. N-acetyltryptophan 6-hydroxylase; part of the pathway that mediates the biosynthesis of the gray-brown conidiophore pigment. The first step of the pathway is performed by the nonribosomal peptide synthetase ivoA that catalyzes ATP-dependent unidirectional stereoinversion of L-tryptophan to D-tryptophan with complete conversion. While the stereoinversion is catalyzed by the epimerization (E) domain of ivoA, the terminal condensation (C) domain stereoselectively hydrolyzes D-tryptophanyl-S-phosphopantetheine thioester and thus represents a non-canonical C domain function. D-tryptophan is acetylated, probably by an endogenous acetyltransferase. N-acetyltryptophan is further 6-hydroxylated into N-acetyl-6-hydroxytryptophan (AHT) by the cytochrome P450 monooxygenase ivoC. N-acetyl-6-hydroxytryptophan is substrate of the N-acetyl-6-hydroxytryptophan oxidase ivoB to produce the gray-brown conidiophore pigment. The protein is N-acetyltryptophan 6-hydroxylase ivoC of Emericella nidulans (strain FGSC A4 / ATCC 38163 / CBS 112.46 / NRRL 194 / M139) (Aspergillus nidulans).